We begin with the raw amino-acid sequence, 258 residues long: Imidazole glycerol phosphate synthase subunit HisF (258 aa).

Catalysis depends on residues Asp12 and Asp131.

Belongs to the HisA/HisF family. In terms of assembly, heterodimer of HisH and HisF.

It localises to the cytoplasm. It catalyses the reaction 5-[(5-phospho-1-deoxy-D-ribulos-1-ylimino)methylamino]-1-(5-phospho-beta-D-ribosyl)imidazole-4-carboxamide + L-glutamine = D-erythro-1-(imidazol-4-yl)glycerol 3-phosphate + 5-amino-1-(5-phospho-beta-D-ribosyl)imidazole-4-carboxamide + L-glutamate + H(+). Its pathway is amino-acid biosynthesis; L-histidine biosynthesis; L-histidine from 5-phospho-alpha-D-ribose 1-diphosphate: step 5/9. Functionally, IGPS catalyzes the conversion of PRFAR and glutamine to IGP, AICAR and glutamate. The HisF subunit catalyzes the cyclization activity that produces IGP and AICAR from PRFAR using the ammonia provided by the HisH subunit. In Corynebacterium diphtheriae (strain ATCC 700971 / NCTC 13129 / Biotype gravis), this protein is Imidazole glycerol phosphate synthase subunit HisF.